We begin with the raw amino-acid sequence, 388 residues long: 3-dehydroquinate synthase (388 aa).

It belongs to the archaeal-type DHQ synthase family.

It carries out the reaction 2-amino-2,3,7-trideoxy-D-lyxo-hept-6-ulosonate + NAD(+) + H2O = 3-dehydroquinate + NH4(+) + NADH + H(+). Catalyzes the oxidative deamination and cyclization of 2-amino-3,7-dideoxy-D-threo-hept-6-ulosonic acid (ADH) to yield 3-dehydroquinate (DHQ), which is fed into the canonical shikimic pathway of aromatic amino acid biosynthesis. The protein is 3-dehydroquinate synthase of Haloarcula marismortui (strain ATCC 43049 / DSM 3752 / JCM 8966 / VKM B-1809) (Halobacterium marismortui).